Consider the following 673-residue polypeptide: Bifunctional polymyxin resistance protein ArnA (673 aa).

The segment at 1 to 311 (MKAIVFAYHD…EMGMVPQARL (311 aa)) is formyltransferase ArnAFT. Catalysis depends on His104, which acts as the Proton donor; for formyltransferase activity. (6R)-10-formyltetrahydrofolate contacts are provided by residues Arg114 and 136 to 140 (VSRAD). Residues 321–673 (RRTRVLILGV…HTADATDTQG (353 aa)) form a dehydrogenase ArnADH region. NAD(+) contacts are provided by residues Asp354 and 375-376 (DI). UDP-alpha-D-glucuronate is bound by residues Ala400, Tyr405, and 439 to 440 (TS). Glu441 functions as the Proton acceptor; for decarboxylase activity in the catalytic mechanism. Residues Arg467, Asn499, 533-542 (KLVDGGAQKR), and Tyr620 each bind UDP-alpha-D-glucuronate. Arg626 serves as the catalytic Proton donor; for decarboxylase activity.

It in the N-terminal section; belongs to the Fmt family. UDP-L-Ara4N formyltransferase subfamily. The protein in the C-terminal section; belongs to the NAD(P)-dependent epimerase/dehydratase family. UDP-glucuronic acid decarboxylase subfamily. Homohexamer, formed by a dimer of trimers.

It carries out the reaction UDP-alpha-D-glucuronate + NAD(+) = UDP-beta-L-threo-pentopyranos-4-ulose + CO2 + NADH. The enzyme catalyses UDP-4-amino-4-deoxy-beta-L-arabinose + (6R)-10-formyltetrahydrofolate = UDP-4-deoxy-4-formamido-beta-L-arabinose + (6S)-5,6,7,8-tetrahydrofolate + H(+). Its pathway is nucleotide-sugar biosynthesis; UDP-4-deoxy-4-formamido-beta-L-arabinose biosynthesis; UDP-4-deoxy-4-formamido-beta-L-arabinose from UDP-alpha-D-glucuronate: step 1/3. The protein operates within nucleotide-sugar biosynthesis; UDP-4-deoxy-4-formamido-beta-L-arabinose biosynthesis; UDP-4-deoxy-4-formamido-beta-L-arabinose from UDP-alpha-D-glucuronate: step 3/3. It functions in the pathway bacterial outer membrane biogenesis; lipopolysaccharide biosynthesis. Functionally, bifunctional enzyme that catalyzes the oxidative decarboxylation of UDP-glucuronic acid (UDP-GlcUA) to UDP-4-keto-arabinose (UDP-Ara4O) and the addition of a formyl group to UDP-4-amino-4-deoxy-L-arabinose (UDP-L-Ara4N) to form UDP-L-4-formamido-arabinose (UDP-L-Ara4FN). The modified arabinose is attached to lipid A and is required for resistance to polymyxin and cationic antimicrobial peptides. This Pectobacterium atrosepticum (strain SCRI 1043 / ATCC BAA-672) (Erwinia carotovora subsp. atroseptica) protein is Bifunctional polymyxin resistance protein ArnA.